A 280-amino-acid chain; its full sequence is Diaminopimelate epimerase (280 aa).

Asparagine 15 and asparagine 66 together coordinate substrate. The active-site Proton donor is the cysteine 75. Substrate-binding positions include 76–77, asparagine 163, asparagine 196, and 214–215; these read GN and ER. The Proton acceptor role is filled by cysteine 223. 224-225 contacts substrate; that stretch reads GT.

The protein belongs to the diaminopimelate epimerase family. Homodimer.

It is found in the cytoplasm. It carries out the reaction (2S,6S)-2,6-diaminopimelate = meso-2,6-diaminopimelate. It participates in amino-acid biosynthesis; L-lysine biosynthesis via DAP pathway; DL-2,6-diaminopimelate from LL-2,6-diaminopimelate: step 1/1. Catalyzes the stereoinversion of LL-2,6-diaminopimelate (L,L-DAP) to meso-diaminopimelate (meso-DAP), a precursor of L-lysine and an essential component of the bacterial peptidoglycan. The sequence is that of Diaminopimelate epimerase from Phocaeicola vulgatus (strain ATCC 8482 / DSM 1447 / JCM 5826 / CCUG 4940 / NBRC 14291 / NCTC 11154) (Bacteroides vulgatus).